Reading from the N-terminus, the 291-residue chain is Shikimate dehydrogenase (NADP(+)) (291 aa).

Shikimate-binding positions include 26–28 (SLS) and Ser73. Lys77 (proton acceptor) is an active-site residue. The shikimate site is built by Asn98 and Asp113. NADP(+)-binding positions include 137–141 (GAGGA) and Val238. Shikimate is bound at residue Tyr240. Gly261 lines the NADP(+) pocket.

It belongs to the shikimate dehydrogenase family. Homodimer.

It catalyses the reaction shikimate + NADP(+) = 3-dehydroshikimate + NADPH + H(+). It participates in metabolic intermediate biosynthesis; chorismate biosynthesis; chorismate from D-erythrose 4-phosphate and phosphoenolpyruvate: step 4/7. Involved in the biosynthesis of the chorismate, which leads to the biosynthesis of aromatic amino acids. Catalyzes the reversible NADPH linked reduction of 3-dehydroshikimate (DHSA) to yield shikimate (SA). This Listeria innocua serovar 6a (strain ATCC BAA-680 / CLIP 11262) protein is Shikimate dehydrogenase (NADP(+)).